We begin with the raw amino-acid sequence, 630 residues long: MVLTRRAALLLCPWVIQLVIKRTLAGDILPNEGKKEKDDVHKIISELRFLQKVETILESSNMSVSDVEADANAYNPDRDAPKEELQKLQDQQETPSKQPNNLRNSPQKRAEKKESPGKNKKSLRLIVSENHATSPSFFEESLLQEDVVSFIQSKGKLSNLKNLKSMIIDLNSDMTDEELAEYISLLERKGALIESDKLVGADDVSLASVKDAVRRGESSVNWGKLRSTMLEVPSGESPPSHAASSGSPFDDDDDLLSEAALHREEAHLAGSKTTKGYKFNDEYRNLQWGLDLARLDETQDLINANRVSVTKICVIDSGIDYNHPDLRNNIDVNVKELHGRKGVDDDSNGVVDDVYGANFVNNSGDPMDDNYHGTHVSGIISAVGNNGIGIVGVDGHSKLVICKALDQHKLGRLGDMFKCIDYCISRQAHMINGSFSFDEYSNIFNASVEHLRSLGILFFVSASNCAHDKLSKPDIAKCDLAVNHRYPPILSKTHNNVIAVANLKRDLDESYSLSVNSFYSNIYCQLAAPGTNIYSTTPMNNYRKLNGTSMASPHVAAIASIVRSINPNLTYLQIVEILRNAIVKLPSLTERVSWGGYVDILRAVNLAIDSKAAPYIKSHSWFRWKQGSRR.

Residues 1–25 (MVLTRRAALLLCPWVIQLVIKRTLA) form the signal peptide. Residues 26 to 202 (GDILPNEGKK…IESDKLVGAD (177 aa)) constitute a propeptide, inhibition peptide. Residues 72–125 (NAYNPDRDAPKEELQKLQDQQETPSKQPNNLRNSPQKRAEKKESPGKNKKSLRL) form a disordered region. Basic and acidic residues predominate over residues 76–87 (PDRDAPKEELQK). The segment covering 94–107 (TPSKQPNNLRNSPQ) has biased composition (polar residues). The segment covering 108 to 117 (KRAEKKESPG) has biased composition (basic and acidic residues). Ca(2+) contacts are provided by Glu129, Asn130, Thr133, Pro135, and Gly190. The segment at 230–254 (LEVPSGESPPSHAASSGSPFDDDDD) is disordered. Residues 233–248 (PSGESPPSHAASSGSP) are compositionally biased toward low complexity. Asp281 contributes to the Ca(2+) binding site. Residues 287–604 (QWGLDLARLD…GGYVDILRAV (318 aa)) enclose the Peptidase S8 domain. Intrachain disulfides connect Cys313–Cys423, Cys402–Cys419, and Cys465–Cys478. The active-site Charge relay system is the Asp316. Ca(2+)-binding residues include Asp325, Glu336, Arg340, Val343, Asp344, Asp345, Asp346, Asn348, Val350, Asp352, and Asp353. The active-site Charge relay system is the His372. Ca(2+)-binding residues include Val383, Asn386, Ile388, and Ile390. An N-linked (GlcNAc...) asparagine glycan is attached at Asn546. Ser549 acts as the Charge relay system in catalysis.

It belongs to the peptidase S8 family. In terms of assembly, heterodimer between p54 form and prodomain p31; the interaction inhibits p54 catalytic activity. Heterodimer p31-p54 is monomeric at basic pH and dimeric at acidic pH; dimerization is driven by the N-terminal prodomain (p31). Requires Ca(2+) as cofactor. The prodomain (p31) is cleaved, probably by autocatalysis, and remains non-covalently associated with the p54 form as an inhibitor. p54 is further cleaved into the p45/p47 forms. Post-translationally, the relevance of the N-glycosylation is not clear. In an insect expression system, SUB1 glycosylation appears to affect its processing into the active mature form suggesting that SUB1 may not be N-glycosylated in parasites.

It localises to the secreted. The protein resides in the parasitophorous vacuole lumen. It catalyses the reaction Hydrolysis of proteins with broad specificity for peptide bonds, and a preference for a large uncharged residue in P1. Hydrolyzes peptide amides.. With respect to regulation, inhibited by peptidic alpha-ketoamide inhibitors. Inhibited by the alpha-ketoamide nonapeptide JMV5126 (isocaproyl-KITAQ(CO)DDEE-NH2). Inhibited by the alpha-ketoamide peptide MAM-117. Functionally, serine protease which plays an essential role in merozoite invasion of and egress from host erythrocytes by processing and activating various merozoite surface and parasitophorous vacuole proteins. This chain is Subtilisin-like protease 1, found in Plasmodium vivax.